The primary structure comprises 262 residues: Type III pantothenate kinase (262 aa).

An ATP-binding site is contributed by D9–K16. Residues Y96 and G103–R106 contribute to the substrate site. The active-site Proton acceptor is D105. T129 is an ATP binding site. T189 lines the substrate pocket.

It belongs to the type III pantothenate kinase family. In terms of assembly, homodimer. It depends on NH4(+) as a cofactor. Requires K(+) as cofactor.

It is found in the cytoplasm. The enzyme catalyses (R)-pantothenate + ATP = (R)-4'-phosphopantothenate + ADP + H(+). It participates in cofactor biosynthesis; coenzyme A biosynthesis; CoA from (R)-pantothenate: step 1/5. Catalyzes the phosphorylation of pantothenate (Pan), the first step in CoA biosynthesis. In Burkholderia multivorans (strain ATCC 17616 / 249), this protein is Type III pantothenate kinase.